Reading from the N-terminus, the 772-residue chain is 5-methyltetrahydropteroyltriglutamate--homocysteine methyltransferase (772 aa).

Residues 24-27 (RELK) and Lys-120 contribute to the 5-methyltetrahydropteroyltri-L-glutamate site. The disordered stretch occupies residues 404-428 (DPAVRSRTAATTDADARRSGPYPER). L-homocysteine contacts are provided by residues 446-448 (IGS) and Glu-499. L-methionine is bound by residues 446 to 448 (IGS) and Glu-499. Trp-576 contributes to the 5-methyltetrahydropteroyltri-L-glutamate binding site. Asp-614 lines the L-homocysteine pocket. Asp-614 is a binding site for L-methionine. 5-methyltetrahydropteroyltri-L-glutamate is bound at residue Glu-620. Zn(2+)-binding residues include His-656, Cys-658, and Glu-680. His-709 (proton donor) is an active-site residue. Position 741 (Cys-741) interacts with Zn(2+).

The protein belongs to the vitamin-B12 independent methionine synthase family. It depends on Zn(2+) as a cofactor.

The catalysed reaction is 5-methyltetrahydropteroyltri-L-glutamate + L-homocysteine = tetrahydropteroyltri-L-glutamate + L-methionine. Its pathway is amino-acid biosynthesis; L-methionine biosynthesis via de novo pathway; L-methionine from L-homocysteine (MetE route): step 1/1. Its function is as follows. Catalyzes the transfer of a methyl group from 5-methyltetrahydrofolate to homocysteine resulting in methionine formation. The chain is 5-methyltetrahydropteroyltriglutamate--homocysteine methyltransferase from Streptomyces avermitilis (strain ATCC 31267 / DSM 46492 / JCM 5070 / NBRC 14893 / NCIMB 12804 / NRRL 8165 / MA-4680).